We begin with the raw amino-acid sequence, 448 residues long: Omega-6 fatty acid desaturase, chloroplastic (448 aa).

Residues 1 to 69 (MASRIADSLF…VKRRIGCIKA (69 aa)) constitute a chloroplast transit peptide. Valine 70 carries the N-acetylvaline modification. 2 helical membrane-spanning segments follow: residues 124–144 (LKAL…LFMI) and 149–169 (WYLL…FFVI). Positions 171–175 (HDCAH) match the Histidine box-1 motif. The short motif at 207–211 (HDRHH) is the Histidine box-2 element. 2 consecutive transmembrane segments (helical) span residues 282–302 (VFAF…ILGW) and 303–323 (VKFW…FTMV). A Histidine box-3 motif is present at residues 367–371 (HIPHH).

This sequence belongs to the fatty acid desaturase type 1 family.

It localises to the plastid. The protein resides in the chloroplast inner membrane. It catalyses the reaction a (9Z)-octadecenoyl-containing glycerolipid + 2 reduced [2Fe-2S]-[ferredoxin] + O2 + 2 H(+) = a (9Z,12Z)-octadecadienoyl-containing glycerolipid + 2 oxidized [2Fe-2S]-[ferredoxin] + 2 H2O. It functions in the pathway lipid metabolism; polyunsaturated fatty acid biosynthesis. Functionally, chloroplast omega-6 fatty acid desaturase introduces the second double bond in the biosynthesis of 16:3 and 18:3 fatty acids, important constituents of plant membranes. It is thought to use ferredoxin as an electron donor and to act on fatty acids esterified to galactolipids, sulfolipids and phosphatidylglycerol. This is Omega-6 fatty acid desaturase, chloroplastic from Arabidopsis thaliana (Mouse-ear cress).